Consider the following 225-residue polypeptide: Small ribosomal subunit protein uS3 (225 aa).

One can recognise a KH type-2 domain in the interval 38–106; the sequence is IRRFLQKKFK…PIGMNIIEVK (69 aa).

Belongs to the universal ribosomal protein uS3 family. As to quaternary structure, part of the 30S ribosomal subunit. Forms a tight complex with proteins S10 and S14.

Functionally, binds the lower part of the 30S subunit head. Binds mRNA in the 70S ribosome, positioning it for translation. The protein is Small ribosomal subunit protein uS3 of Leptospira biflexa serovar Patoc (strain Patoc 1 / Ames).